Reading from the N-terminus, the 59-residue chain is MAKLKITLKKSLIGRKKDHIATVNALGLKKIGKVVEHEDNPQIKGMIKKVSYLLEVEEV.

This sequence belongs to the universal ribosomal protein uL30 family. As to quaternary structure, part of the 50S ribosomal subunit.

The sequence is that of Large ribosomal subunit protein uL30 from Clostridium kluyveri (strain ATCC 8527 / DSM 555 / NBRC 12016 / NCIMB 10680 / K1).